The following is a 299-amino-acid chain: Tyrosine recombinase XerC (299 aa).

Positions 3–87 (PQCQSYLQQF…AIKQWGEFLL (85 aa)) constitute a Core-binding (CB) domain. The Tyr recombinase domain occupies 108–287 (PLPKNIDVDS…DFQHLAKVYD (180 aa)). Active-site residues include Arg-147, Lys-171, His-239, Arg-242, and His-265. The O-(3'-phospho-DNA)-tyrosine intermediate role is filled by Tyr-274.

Belongs to the 'phage' integrase family. XerC subfamily. Forms a cyclic heterotetrameric complex composed of two molecules of XerC and two molecules of XerD.

The protein localises to the cytoplasm. Functionally, site-specific tyrosine recombinase, which acts by catalyzing the cutting and rejoining of the recombining DNA molecules. The XerC-XerD complex is essential to convert dimers of the bacterial chromosome into monomers to permit their segregation at cell division. It also contributes to the segregational stability of plasmids. This chain is Tyrosine recombinase XerC, found in Shewanella sp. (strain ANA-3).